Here is a 133-residue protein sequence, read N- to C-terminus: Aspartate 1-decarboxylase (133 aa).

The active-site Schiff-base intermediate with substrate; via pyruvic acid is Ser26. Ser26 is subject to Pyruvic acid (Ser). Thr58 lines the substrate pocket. The active-site Proton donor is Tyr59. Residue 74-76 (GAA) coordinates substrate.

It belongs to the PanD family. Heterooctamer of four alpha and four beta subunits. Requires pyruvate as cofactor. Post-translationally, is synthesized initially as an inactive proenzyme, which is activated by self-cleavage at a specific serine bond to produce a beta-subunit with a hydroxyl group at its C-terminus and an alpha-subunit with a pyruvoyl group at its N-terminus.

The protein resides in the cytoplasm. The enzyme catalyses L-aspartate + H(+) = beta-alanine + CO2. It participates in cofactor biosynthesis; (R)-pantothenate biosynthesis; beta-alanine from L-aspartate: step 1/1. Its function is as follows. Catalyzes the pyruvoyl-dependent decarboxylation of aspartate to produce beta-alanine. The polypeptide is Aspartate 1-decarboxylase (Legionella pneumophila subsp. pneumophila (strain Philadelphia 1 / ATCC 33152 / DSM 7513)).